The chain runs to 833 residues: Leucine--tRNA ligase (833 aa).

The short motif at 41–52 (PYPSGAGLHVGH) is the 'HIGH' region element. The short motif at 610 to 614 (KMSKS) is the 'KMSKS' region element. Lysine 613 contacts ATP.

The protein belongs to the class-I aminoacyl-tRNA synthetase family.

It localises to the cytoplasm. The catalysed reaction is tRNA(Leu) + L-leucine + ATP = L-leucyl-tRNA(Leu) + AMP + diphosphate. This Streptococcus pyogenes serotype M6 (strain ATCC BAA-946 / MGAS10394) protein is Leucine--tRNA ligase.